Consider the following 483-residue polypeptide: Bifunctional protein HldE (483 aa).

The segment at 1–327 is ribokinase; it reads MDDALAHLPR…ACASSAQGEP (327 aa). 201 to 204 is an ATP binding site; the sequence is NRKE. Asp-272 is a catalytic residue. The segment at 354–483 is cytidylyltransferase; the sequence is FTNGCFDLLH…TTNLIARMNS (130 aa).

In the N-terminal section; belongs to the carbohydrate kinase PfkB family. This sequence in the C-terminal section; belongs to the cytidylyltransferase family. As to quaternary structure, homodimer.

The enzyme catalyses D-glycero-beta-D-manno-heptose 7-phosphate + ATP = D-glycero-beta-D-manno-heptose 1,7-bisphosphate + ADP + H(+). It carries out the reaction D-glycero-beta-D-manno-heptose 1-phosphate + ATP + H(+) = ADP-D-glycero-beta-D-manno-heptose + diphosphate. The protein operates within nucleotide-sugar biosynthesis; ADP-L-glycero-beta-D-manno-heptose biosynthesis; ADP-L-glycero-beta-D-manno-heptose from D-glycero-beta-D-manno-heptose 7-phosphate: step 1/4. It functions in the pathway nucleotide-sugar biosynthesis; ADP-L-glycero-beta-D-manno-heptose biosynthesis; ADP-L-glycero-beta-D-manno-heptose from D-glycero-beta-D-manno-heptose 7-phosphate: step 3/4. In terms of biological role, catalyzes the phosphorylation of D-glycero-D-manno-heptose 7-phosphate at the C-1 position to selectively form D-glycero-beta-D-manno-heptose-1,7-bisphosphate. Catalyzes the ADP transfer from ATP to D-glycero-beta-D-manno-heptose 1-phosphate, yielding ADP-D-glycero-beta-D-manno-heptose. This chain is Bifunctional protein HldE, found in Caulobacter vibrioides (strain ATCC 19089 / CIP 103742 / CB 15) (Caulobacter crescentus).